A 449-amino-acid polypeptide reads, in one-letter code: Elongation factor 1-alpha 1 (449 aa).

Residues 5 to 230 enclose the tr-type G domain; that stretch reads KVHMNLVVVG…DMLEPPVRPS (226 aa). Residues 14-21 are G1; sequence GHVDAGKS. Residue 14–21 coordinates GTP; that stretch reads GHVDAGKS. Residues 70 to 74 are G2; sequence GITID. A G3 region spans residues 91 to 94; sequence DAPG. GTP-binding positions include 91–95 and 153–156; these read DAPGH and NKMD. The segment at 153–156 is G4; the sequence is NKMD. Positions 194–196 are G5; that stretch reads SGW. E362 carries the 5-glutamyl glycerylphosphorylethanolamine modification.

The protein belongs to the TRAFAC class translation factor GTPase superfamily. Classic translation factor GTPase family. EF-Tu/EF-1A subfamily. Post-translationally, phosphatidylethanolamine (PE) is a direct precursor of the ethanolamine-phosphoglycerol (EPG) moiety.

It localises to the cytoplasm. This protein promotes the GTP-dependent binding of aminoacyl-tRNA to the A-site of ribosomes during protein biosynthesis. In Trypanosoma brucei brucei (strain 927/4 GUTat10.1), this protein is Elongation factor 1-alpha 1 (TEF1).